The primary structure comprises 87 residues: Small ribosomal subunit protein bS20 (87 aa).

Positions M1–I15 are enriched in basic residues. Positions M1 to K29 are disordered. Residues A19–K29 are compositionally biased toward polar residues.

Belongs to the bacterial ribosomal protein bS20 family.

Binds directly to 16S ribosomal RNA. This chain is Small ribosomal subunit protein bS20, found in Bdellovibrio bacteriovorus (strain ATCC 15356 / DSM 50701 / NCIMB 9529 / HD100).